Here is a 95-residue protein sequence, read N- to C-terminus: Protein TusB (95 aa).

The protein belongs to the DsrH/TusB family. Heterohexamer, formed by a dimer of trimers. The hexameric TusBCD complex contains 2 copies each of TusB, TusC and TusD. The TusBCD complex interacts with TusE.

It is found in the cytoplasm. Its function is as follows. Part of a sulfur-relay system required for 2-thiolation of 5-methylaminomethyl-2-thiouridine (mnm(5)s(2)U) at tRNA wobble positions. The polypeptide is Protein TusB (Shigella sonnei (strain Ss046)).